We begin with the raw amino-acid sequence, 577 residues long: Protein hinderin (577 aa).

Ser21 is subject to Phosphoserine. Residues 91 to 167 (LKDLCLEDKR…CQELLSLYQK (77 aa)) are a coiled coil. Position 179 is a phosphoserine (Ser179). A disordered region spans residues 251 to 282 (TLHHPKDDLDKIPSETTTCNCESPGRKPAVPT). Over residues 254–263 (HPKDDLDKIP) the composition is skewed to basic and acidic residues. Residues 358-402 (LKKQISEDRKQQLMLQKMELEIEKERLQHLLAQQETKLLLKQQQL) are a coiled coil. 3 disordered regions span residues 425-444 (SSSI…RKER), 449-492 (FHSH…GSLK), and 520-540 (LSPN…GAWN). Residues 449–468 (FHSHMKDDAQWSCQKKDTCR) show a composition bias toward basic and acidic residues. Phosphoserine is present on residues Ser490 and Ser521.

As to quaternary structure, interacts (via N- and C-terminal domains) with SMC3 (via central hinge region). In terms of tissue distribution, widely expressed.

Competes with SMC1 for binding to SMC3. May affect the availability of SMC3 to engage in the formation of multimeric protein complexes. This Homo sapiens (Human) protein is Protein hinderin (KIAA1328).